We begin with the raw amino-acid sequence, 711 residues long: Exotoxin translocation ATP-binding protein PaxB (711 aa).

Residues M1–L129 enclose the Peptidase C39 domain. The next 5 helical transmembrane spans lie at I157 to L177, L195 to L215, A273 to Y293, I299 to L319, and V392 to G412. The ABC transmembrane type-1 domain occupies F158–Q440. The ABC transporter domain maps to V472–Q707. An ATP-binding site is contributed by G506 to S513.

The protein belongs to the ABC transporter superfamily. Protein-1 exporter (TC 3.A.1.109) family. As to quaternary structure, homodimer.

It localises to the cell inner membrane. It carries out the reaction ATP + H2O + proteinSide 1 = ADP + phosphate + proteinSide 2.. Functionally, part of the ABC transporter complex PaxBD involved in PaxA export. Transmembrane domains (TMD) form a pore in the inner membrane and the ATP-binding domain (NBD) is responsible for energy generation. In Pasteurella aerogenes, this protein is Exotoxin translocation ATP-binding protein PaxB (paxB).